The primary structure comprises 184 residues: UPF0398 protein BC_1561 (184 aa).

This sequence belongs to the UPF0398 family.

This is UPF0398 protein BC_1561 from Bacillus cereus (strain ATCC 14579 / DSM 31 / CCUG 7414 / JCM 2152 / NBRC 15305 / NCIMB 9373 / NCTC 2599 / NRRL B-3711).